A 246-amino-acid chain; its full sequence is Bis(5'-nucleosyl)-tetraphosphatase PrpE [asymmetrical] (246 aa).

It belongs to the PrpE family. Ni(2+) serves as cofactor.

The catalysed reaction is P(1),P(4)-bis(5'-guanosyl) tetraphosphate + H2O = GMP + GTP + 2 H(+). In terms of biological role, asymmetrically hydrolyzes Ap4p to yield AMP and ATP. The chain is Bis(5'-nucleosyl)-tetraphosphatase PrpE [asymmetrical] from Bacillus cereus (strain AH187).